The sequence spans 472 residues: Cell division protein FtsP (472 aa).

Residues 1 to 32 (MSLSRRRFIQASGLALCAGGLPLQARASGAQA) constitute a signal peptide (tat-type signal).

Belongs to the FtsP family. Predicted to be exported by the Tat system. The position of the signal peptide cleavage has not been experimentally proven.

The protein resides in the periplasm. Functionally, cell division protein that is required for growth during stress conditions. May be involved in protecting or stabilizing the divisomal assembly under conditions of stress. The chain is Cell division protein FtsP from Edwardsiella tarda (strain FL6-60).